Here is a 284-residue protein sequence, read N- to C-terminus: Nucleotide-binding protein Teth39_0666 (284 aa).

Residue 8–15 (GLSGAGKT) coordinates ATP. 58–61 (DLRG) lines the GTP pocket.

Belongs to the RapZ-like family.

Functionally, displays ATPase and GTPase activities. This chain is Nucleotide-binding protein Teth39_0666, found in Thermoanaerobacter pseudethanolicus (strain ATCC 33223 / 39E) (Clostridium thermohydrosulfuricum).